The following is a 208-amino-acid chain: Uracil phosphoribosyltransferase (208 aa).

5-phospho-alpha-D-ribose 1-diphosphate-binding positions include Arg78, Arg103, and Asp130–Ser138. Uracil is bound by residues Ile193 and Gly198–Ala200. Residue Asp199 participates in 5-phospho-alpha-D-ribose 1-diphosphate binding.

This sequence belongs to the UPRTase family. It depends on Mg(2+) as a cofactor.

It carries out the reaction UMP + diphosphate = 5-phospho-alpha-D-ribose 1-diphosphate + uracil. Its pathway is pyrimidine metabolism; UMP biosynthesis via salvage pathway; UMP from uracil: step 1/1. Its activity is regulated as follows. Allosterically activated by GTP. Its function is as follows. Catalyzes the conversion of uracil and 5-phospho-alpha-D-ribose 1-diphosphate (PRPP) to UMP and diphosphate. This Thermosipho africanus (strain TCF52B) protein is Uracil phosphoribosyltransferase.